Reading from the N-terminus, the 299-residue chain is Coenzyme PQQ synthesis protein B (299 aa).

Belongs to the PqqB family.

The protein operates within cofactor biosynthesis; pyrroloquinoline quinone biosynthesis. Functionally, may be involved in the transport of PQQ or its precursor to the periplasm. In Methylorubrum extorquens (strain PA1) (Methylobacterium extorquens), this protein is Coenzyme PQQ synthesis protein B.